Here is an 887-residue protein sequence, read N- to C-terminus: Alanine--tRNA ligase (887 aa).

Residues H563, H567, C677, and H681 each contribute to the Zn(2+) site.

The protein belongs to the class-II aminoacyl-tRNA synthetase family. The cofactor is Zn(2+).

It localises to the cytoplasm. The catalysed reaction is tRNA(Ala) + L-alanine + ATP = L-alanyl-tRNA(Ala) + AMP + diphosphate. Its function is as follows. Catalyzes the attachment of alanine to tRNA(Ala) in a two-step reaction: alanine is first activated by ATP to form Ala-AMP and then transferred to the acceptor end of tRNA(Ala). Also edits incorrectly charged Ser-tRNA(Ala) and Gly-tRNA(Ala) via its editing domain. The protein is Alanine--tRNA ligase of Dinoroseobacter shibae (strain DSM 16493 / NCIMB 14021 / DFL 12).